The following is a 1004-amino-acid chain: Protein CHUP1, chloroplastic (1004 aa).

Positions 1–25 (MFVRIGFVVAASIAAVTVKRLNVKP) are required for chloroplast localization. A disordered region spans residues 22–63 (NVKPSKPSKPSDNGEGGDKEQSVDPDYNLNDKNLQEEEEEEE). Residues 123–341 (EMAYNDGELE…KQVEGLQMNR (219 aa)) are a coiled coil. The interval 269–290 (LEVQVMELKRKNRELQHEKREL) is leucine-zipper 1. Disordered regions lie at residues 398-482 (GSER…SMNK), 504-536 (FGQVDQESPGTPETPNLPRIRTQQQASSPGEGL), 612-718 (TATG…GNKV), and 736-755 (SKKEGAPSLISSGTGNSSAA). Ser-399 carries the post-translational modification Phosphoserine. A compositionally biased stretch (polar residues) spans 409 to 419 (ESNYSQPSSPG). Residues 427 to 439 (SMDSSTSRFSSFS) are compositionally biased toward low complexity. 2 stretches are compositionally biased toward polar residues: residues 504-517 (FGQVDQESPGTPET) and 612-624 (TATGDQSNESNES). Residues 670 to 706 (ARPPLPGGGPPPPPPPPGGGPPPPPGGGPPPPPPPPG) are compositionally biased toward pro residues. A compositionally biased stretch (polar residues) spans 744 to 755 (LISSGTGNSSAA). A leucine-zipper 2 region spans residues 802 to 823 (LLAFVSWLDEELSFLVDERAVL). Positions 979 to 1004 (RSRAKTESGDNNNNNNNNSNEEESVN) are disordered.

As to expression, expressed in cauline leaves, rosette leaves, stems and flowers, but not in roots.

Its subcellular location is the plastid. It is found in the chloroplast outer membrane. In terms of biological role, required for the positioning and movement of chloroplasts. Interacts with profilin and actin independent of its polymerization status. Regulates chloroplast localization by anchoring chloroplasts to the plasma membrane and forming a bridge to the actin cytoskeleton. This chain is Protein CHUP1, chloroplastic (CHUP1), found in Arabidopsis thaliana (Mouse-ear cress).